The primary structure comprises 175 residues: Large ribosomal subunit protein bL17 (175 aa).

The interval 124-175 is disordered; sequence VKKSKPTAPAQAVATKPAVEETREAAAAQPQEPEVEISEVKDPAEECEAKAD. Residues 161 to 175 are compositionally biased toward basic and acidic residues; the sequence is SEVKDPAEECEAKAD.

The protein belongs to the bacterial ribosomal protein bL17 family. Part of the 50S ribosomal subunit. Contacts protein L32.

In Geobacter sulfurreducens (strain ATCC 51573 / DSM 12127 / PCA), this protein is Large ribosomal subunit protein bL17.